A 428-amino-acid polypeptide reads, in one-letter code: Adenylosuccinate synthetase (428 aa).

GTP-binding positions include 12-18 (GDEGKGK) and 40-42 (GHT). Catalysis depends on Asp-13, which acts as the Proton acceptor. Mg(2+)-binding residues include Asp-13 and Gly-40. IMP is bound by residues 13–16 (DEGK), 38–41 (NAGH), Thr-128, Arg-142, Gln-223, Thr-238, and Arg-302. Residue His-41 is the Proton donor of the active site. Position 298–304 (298–304 (VTTGRPR)) interacts with substrate. GTP-binding positions include Arg-304, 330–332 (KLD), and 413–415 (GVG).

It belongs to the adenylosuccinate synthetase family. As to quaternary structure, homodimer. Mg(2+) serves as cofactor.

Its subcellular location is the cytoplasm. It carries out the reaction IMP + L-aspartate + GTP = N(6)-(1,2-dicarboxyethyl)-AMP + GDP + phosphate + 2 H(+). It functions in the pathway purine metabolism; AMP biosynthesis via de novo pathway; AMP from IMP: step 1/2. Plays an important role in the de novo pathway of purine nucleotide biosynthesis. Catalyzes the first committed step in the biosynthesis of AMP from IMP. The protein is Adenylosuccinate synthetase of Acidothermus cellulolyticus (strain ATCC 43068 / DSM 8971 / 11B).